We begin with the raw amino-acid sequence, 494 residues long: MFKFASAVILCVVAASSTLAQHNPHWWGNRNTIVHLFEWKWDDIAAECENFLGPHGFAGVQVSPVNENIISSGRPWWERYQPISYKLTTRSGDEQDFGDMVRRCNDVGVRIYVDVLLNHMSGDFDGVAVGTAGTEAEPSKKSFPGVPYSAQDFHPSCEITDWNDRFQVQQCELVGLKDLDQSSDWVRSKLIEFLDHLIELGVAGFRVDAAKHMAADDLSYIYSSLSDLSTEHGFPHNARPFIFQEVIDHGHETVSREEYNTLGAVTEFRFSEEIGNAFRGNNALKWLQSWGTGWGFLPSGQALTFVDNHDNQRDMGAVLNYKSPKQYKMATAFHLAYPYGISRVMSSFAFDDHDTAPPQDAQERIISPEFDAEGACVNGWICEHRWRQIYAMVGFKNAVRDTELSNWWDNGDSQISFCRGNKGFLAVNNNLYDLSQDLQTCLPAGVYCDVISGSLVDGSCTGKSVTVDSNGYGYVHIGSDDFDGVLALHVDAKV.

The signal sequence occupies residues 1–20; it reads MFKFASAVILCVVAASSTLA. Gln21 is modified (pyrrolidone carboxylic acid). A disulfide bridge links Cys48 with Cys104. Ca(2+) contacts are provided by Asn118, Gln169, and Asp178. Cysteines 157 and 171 form a disulfide. Residue Arg206 participates in chloride binding. Asp208 serves as the catalytic Nucleophile. His212 serves as a coordination point for Ca(2+). Glu245 acts as the Proton donor in catalysis. Residues Asn308 and Arg343 each coordinate chloride. 3 disulfide bridges follow: Cys376/Cys382, Cys418/Cys441, and Cys448/Cys460.

The protein belongs to the glycosyl hydrolase 13 family. As to quaternary structure, monomer. Ca(2+) is required as a cofactor. It depends on chloride as a cofactor.

The protein localises to the secreted. The catalysed reaction is Endohydrolysis of (1-&gt;4)-alpha-D-glucosidic linkages in polysaccharides containing three or more (1-&gt;4)-alpha-linked D-glucose units.. This Drosophila varians (Fruit fly) protein is Alpha-amylase-related protein (Amyrel).